Here is a 187-residue protein sequence, read N- to C-terminus: Protein McbG (187 aa).

Belongs to the pentapeptide repeat protein family.

Its function is as follows. Together with proteins McbE and McbF this protein causes immunity to the peptide antibiotic microcin B17 (MccB17), which inhibits DNA replication in Enterobacteriaceae by induction of the SOS repair system. McbG alone can provide some protection. This Escherichia coli protein is Protein McbG (mcbG).